The following is a 486-amino-acid chain: Cysteine--tRNA ligase (486 aa).

C29 is a binding site for Zn(2+). The 'HIGH' region signature appears at 31–41 (VTVYDYCHLGH). Positions 214, 239, and 243 each coordinate Zn(2+). A 'KMSKS' region motif is present at residues 271–275 (KMSKS). ATP is bound at residue K274.

Belongs to the class-I aminoacyl-tRNA synthetase family. As to quaternary structure, monomer. Requires Zn(2+) as cofactor.

It is found in the cytoplasm. The catalysed reaction is tRNA(Cys) + L-cysteine + ATP = L-cysteinyl-tRNA(Cys) + AMP + diphosphate. The polypeptide is Cysteine--tRNA ligase (Trichormus variabilis (strain ATCC 29413 / PCC 7937) (Anabaena variabilis)).